The primary structure comprises 698 residues: Macrophomene synthase (698 aa).

The segment at 21-340 is terpene cyclase; it reads MEYMYSVPLD…SCDRYSSYRR (320 aa). Aspartate 113 lines the Mg(2+) pocket. The DDXXD 1 motif lies at 113 to 117; it reads DNIAE. The NSE/DTE signature appears at 242–250; sequence NDFFSFNYE. A prenyltransferase region spans residues 341 to 696; sequence EKHQMELPIR…IQLALERLRI (356 aa). Positions 368–387 are disordered; that stretch reads LPNGKQLDAPTESSGKDLSD. Isopentenyl diphosphate is bound by residues lysine 417, arginine 420, and histidine 449. Mg(2+) contacts are provided by aspartate 456 and aspartate 460. The short motif at 456-460 is the DDXXD 2 element; the sequence is DDIED. Arginine 465 lines the dimethylallyl diphosphate pocket. Arginine 466 contacts isopentenyl diphosphate. Dimethylallyl diphosphate is bound by residues lysine 543, threonine 544, glutamine 579, asparagine 586, lysine 596, and lysine 606.

In the N-terminal section; belongs to the terpene synthase family. This sequence in the C-terminal section; belongs to the FPP/GGPP synthase family. In terms of assembly, hexamer. Mg(2+) serves as cofactor.

It catalyses the reaction 5 isopentenyl diphosphate + dimethylallyl diphosphate = all-trans-hexaprenyl diphosphate + 5 diphosphate. It carries out the reaction all-trans-hexaprenyl diphosphate = macrophomene + diphosphate. Functionally, bifunctional terpene synthase that converts dimethylallyl diphosphate (DMAPP) and isopentenyl diphosphate (IPP) into macrophomene as a single product. The C-terminal prenyltransferase (PT) domain of MpMS catalyzes formation of hexaprenyl diphosphate (HexPP), whereas the N-terminal terpene cyclase (TC) domain catalyzes the cyclization of HexPP to macrophomene. In Macrophomina phaseolina (strain MS6) (Charcoal rot fungus), this protein is Macrophomene synthase.